Here is a 122-residue protein sequence, read N- to C-terminus: Large ribosomal subunit protein uL14 (122 aa).

Belongs to the universal ribosomal protein uL14 family. Part of the 50S ribosomal subunit. Forms a cluster with proteins L3 and L19. In the 70S ribosome, L14 and L19 interact and together make contacts with the 16S rRNA in bridges B5 and B8.

Its function is as follows. Binds to 23S rRNA. Forms part of two intersubunit bridges in the 70S ribosome. The polypeptide is Large ribosomal subunit protein uL14 (Nitrosococcus oceani (strain ATCC 19707 / BCRC 17464 / JCM 30415 / NCIMB 11848 / C-107)).